The chain runs to 177 residues: Adenylyl-sulfate kinase (177 aa).

12–19 serves as a coordination point for ATP; it reads GLSGAGKT. Serine 86 serves as the catalytic Phosphoserine intermediate.

The protein belongs to the APS kinase family.

The enzyme catalyses adenosine 5'-phosphosulfate + ATP = 3'-phosphoadenylyl sulfate + ADP + H(+). Its pathway is sulfur metabolism; hydrogen sulfide biosynthesis; sulfite from sulfate: step 2/3. Functionally, catalyzes the synthesis of activated sulfate. The polypeptide is Adenylyl-sulfate kinase (Picosynechococcus sp. (strain ATCC 27264 / PCC 7002 / PR-6) (Agmenellum quadruplicatum)).